Consider the following 411-residue polypeptide: MNALAATNRNFRQAARILGLDSKLEKSLLIPFREIKVECTIPKDDGTLVSYVGFRVQHDNARGPMKGGIRYHPEVDLDEVNALAQLMTWKTAVADIPYGGAKGGIGCKPKDLSKSELERLTRVFTQKIHDLIGINTDVPAPDMGTNAQTMAWILDEYSKFHGHSPAIVTGKPIDLGGSLGREAATGRGVVYATEALLAEYGKNIKDLTFAIQGFGNVGAWAAKLIHERGGKVIAVSDITGAVKNPNGLDIPALLNHKEATGKLIDFSGGDVMNSDEVLTHECDVLIPCALGGVLNRENADNVKAKFIIEAANHPTDPEADEILCKKGIVILPDIYANAGGVTVSYFEWVQNIQGFMWDEEKVNRELRKYMTKAFHNLKNMCQSHNCSLRMGAFTLGVNRVARATTLRGWEA.

Lysine 102 is a catalytic residue.

It belongs to the Glu/Leu/Phe/Val dehydrogenases family.

It carries out the reaction L-glutamate + NAD(+) + H2O = 2-oxoglutarate + NH4(+) + NADH + H(+). The enzyme catalyses L-glutamate + NADP(+) + H2O = 2-oxoglutarate + NH4(+) + NADPH + H(+). The polypeptide is Glutamate dehydrogenase A (GDHA) (Nicotiana plumbaginifolia (Leadwort-leaved tobacco)).